Reading from the N-terminus, the 337-residue chain is Bifunctional methylenetetrahydrofolate dehydrogenase/cyclohydrolase, mitochondrial (337 aa).

The N-terminal 30 residues, 1–30 (MATALCPLRALGQTAFRPRTRRLHLSAPRA), are a transit peptide targeting the mitochondrion. Substrate is bound by residues 79 to 83 (YVLNK) and 126 to 128 (VQL). NAD(+) is bound by residues 195–197 (GRS) and arginine 228. 304 to 308 (PGGVG) serves as a coordination point for substrate.

It belongs to the tetrahydrofolate dehydrogenase/cyclohydrolase family. The cofactor is Mg(2+).

It is found in the mitochondrion. The catalysed reaction is (6R)-5,10-methylene-5,6,7,8-tetrahydrofolate + NAD(+) = (6R)-5,10-methenyltetrahydrofolate + NADH. It carries out the reaction (6R)-5,10-methenyltetrahydrofolate + H2O = (6R)-10-formyltetrahydrofolate + H(+). Although its dehydrogenase activity is NAD-specific, it can also utilize NADP at a reduced efficiency. The chain is Bifunctional methylenetetrahydrofolate dehydrogenase/cyclohydrolase, mitochondrial (MTHFD2) from Gallus gallus (Chicken).